Here is a 502-residue protein sequence, read N- to C-terminus: Zinc finger protein 488 (502 aa).

The region spanning 8 to 130 (RSLWTNDSKI…EGEELLVWYD (123 aa)) is the SET domain. Residue Tyr-129 coordinates S-adenosyl-L-methionine. The C2H2-type 1; atypical zinc finger occupies 151–174 (YTCTRCGQAFKNENPFLAHCRFLC). Disordered regions lie at residues 267 to 303 (SEPT…KSSR) and 338 to 361 (PSKR…LDSF). Over residues 269-286 (PTDNAQTNESKISKNSAF) the composition is skewed to polar residues. C2H2-type zinc fingers lie at residues 438–460 (NWCA…MRSH) and 479–501 (LTCP…MTSH).

The protein belongs to the krueppel C2H2-type zinc-finger protein family. In terms of tissue distribution, expressed in pMN progenitors and oligodendrocyte lineage cells in the embryo with expression declining in oligodendrocytes undergoing differentiation.

The protein resides in the nucleus. Functionally, transcriptional repressor. May have histone methyltransferase activity. Negatively regulates shh signaling activity in pMN progenitor cells which prevents their switch from motor neuron to oligodendrocyte precursor cell production. Independently of shh activity, also regulates oligodendrocyte formation. The sequence is that of Zinc finger protein 488 from Danio rerio (Zebrafish).